The following is a 206-amino-acid chain: Small ribosomal subunit protein uS4A (206 aa).

The S4 RNA-binding domain occupies 98–163 (MRLDNVVYRL…SERFKMFAEN (66 aa)).

This sequence belongs to the universal ribosomal protein uS4 family. Part of the 30S ribosomal subunit. Contacts protein S5. The interaction surface between S4 and S5 is involved in control of translational fidelity.

In terms of biological role, one of the primary rRNA binding proteins, it binds directly to 16S rRNA where it nucleates assembly of the body of the 30S subunit. With S5 and S12 plays an important role in translational accuracy. The chain is Small ribosomal subunit protein uS4A from Clostridium perfringens (strain ATCC 13124 / DSM 756 / JCM 1290 / NCIMB 6125 / NCTC 8237 / Type A).